Reading from the N-terminus, the 345-residue chain is Protein TRIGALACTOSYLDIACYLGLYCEROL 3, chloroplastic (345 aa).

The N-terminal 46 residues, 1 to 46 (MLSLSCSSSSSSLLPPSLHYHGSSSVQSIVVPRRSLISFRRKVSCC), are a transit peptide targeting the chloroplast. Residues 85 to 336 (IECRDVYKSF…TNPIVQQFAT (252 aa)) enclose the ABC transporter domain. Residue 117 to 124 (GPSGTGKS) participates in ATP binding.

This sequence belongs to the ABC transporter superfamily. ABCI family. In terms of assembly, catalytic subunit of the TGD complex, a lipid translocator at the inner chloroplast envelope membrane made of TGD1, TGD2 and TGD3. Interacts with TGD1 and TGD2 with an overall subunit stoichiometry of 2 TGD1, 2 TGD3 and 8 to 12 TGD2. Interacts with TGD5.

The protein resides in the plastid. It localises to the chloroplast stroma. ATPase transporter involved in lipid transfer from the endoplasmic reticulum (ER) to plastids, and necessary for thylakoids formation. Not involved in transition metal transport pathways. The polypeptide is Protein TRIGALACTOSYLDIACYLGLYCEROL 3, chloroplastic (Arabidopsis thaliana (Mouse-ear cress)).